We begin with the raw amino-acid sequence, 117 residues long: Cuticular protein 47Eg (117 aa).

A signal peptide spans 1-16; sequence MKFFIAFACLLAVALA. The region spanning 31-97 is the Chitin-binding type R&amp;R domain; the sequence is VDGFAYAVEL…SANPPLPTPP (67 aa).

Its function is as follows. Component of the larval cuticle. In Drosophila melanogaster (Fruit fly), this protein is Cuticular protein 47Eg (Cpr47Eg).